A 453-amino-acid chain; its full sequence is Kynureninase (453 aa).

Pyridoxal 5'-phosphate-binding positions include L111, T112, F139–D142, S196, D226, H229, and Y251. Position 252 is an N6-(pyridoxal phosphate)lysine (K252). Residues W286 and N314 each contribute to the pyridoxal 5'-phosphate site.

The protein belongs to the kynureninase family. As to quaternary structure, homodimer. Pyridoxal 5'-phosphate serves as cofactor.

It localises to the cytoplasm. The protein localises to the nucleus. It catalyses the reaction L-kynurenine + H2O = anthranilate + L-alanine + H(+). The enzyme catalyses 3-hydroxy-L-kynurenine + H2O = 3-hydroxyanthranilate + L-alanine + H(+). Its pathway is amino-acid degradation; L-kynurenine degradation; L-alanine and anthranilate from L-kynurenine: step 1/1. It participates in cofactor biosynthesis; NAD(+) biosynthesis; quinolinate from L-kynurenine: step 2/3. Functionally, catalyzes the cleavage of L-kynurenine (L-Kyn) and L-3-hydroxykynurenine (L-3OHKyn) into anthranilic acid (AA) and 3-hydroxyanthranilic acid (3-OHAA), respectively. This is Kynureninase from Saccharomyces cerevisiae (strain ATCC 204508 / S288c) (Baker's yeast).